A 308-amino-acid polypeptide reads, in one-letter code: Homoserine O-acetyltransferase (308 aa).

The Acyl-thioester intermediate role is filled by cysteine 142. Substrate-binding residues include lysine 163 and serine 192. The Proton acceptor role is filled by histidine 235. Residue glutamate 237 is part of the active site. Arginine 249 contributes to the substrate binding site.

This sequence belongs to the MetA family.

It is found in the cytoplasm. The enzyme catalyses L-homoserine + acetyl-CoA = O-acetyl-L-homoserine + CoA. Its pathway is amino-acid biosynthesis; L-methionine biosynthesis via de novo pathway; O-acetyl-L-homoserine from L-homoserine: step 1/1. Functionally, transfers an acetyl group from acetyl-CoA to L-homoserine, forming acetyl-L-homoserine. This Rhizobium rhizogenes (strain K84 / ATCC BAA-868) (Agrobacterium radiobacter) protein is Homoserine O-acetyltransferase.